The following is a 519-amino-acid chain: Glutamate--cysteine ligase (519 aa).

Belongs to the glutamate--cysteine ligase type 1 family. Type 1 subfamily.

It carries out the reaction L-cysteine + L-glutamate + ATP = gamma-L-glutamyl-L-cysteine + ADP + phosphate + H(+). The protein operates within sulfur metabolism; glutathione biosynthesis; glutathione from L-cysteine and L-glutamate: step 1/2. This Edwardsiella ictaluri (strain 93-146) protein is Glutamate--cysteine ligase.